A 41-amino-acid polypeptide reads, in one-letter code: Replication-associated protein (41 aa).

Its function is as follows. Involved in viral RNA replication. This chain is Replication-associated protein, found in Potato leafroll virus (strain Potato/Scotland/strain 1/1984) (PLrV).